A 190-amino-acid chain; its full sequence is Venom nerve growth factor (190 aa).

The first 7 residues, 1–7 (FLIGIWA), serve as a signal peptide directing secretion. Positions 8–111 (APKSEDNVPL…SLNRNIRAKR (104 aa)) are excised as a propeptide. Cys125 and Cys190 are oxidised to a cystine. Residue Asn134 is glycosylated (N-linked (GlcNAc...) asparagine).

It belongs to the NGF-beta family. Homodimer; non-covalently linked. In terms of processing, glycosylated. In terms of tissue distribution, expressed by the venom gland.

It is found in the secreted. Its function is as follows. Nerve growth factor is important for the development and maintenance of the sympathetic and sensory nervous systems. It stimulates division and differentiation of sympathetic and embryonic sensory neurons as well as basal forebrain cholinergic neurons in the brain. Its relevance in the snake venom is not clear. However, it has been shown to inhibit metalloproteinase-dependent proteolysis of platelet glycoprotein Ib alpha, suggesting a metalloproteinase inhibition to prevent metalloprotease autodigestion and/or protection against prey proteases. Binds a lipid between the two protein chains in the homodimer. The lipid-bound form promotes histamine relase from mouse mast cells, contrary to the lipid-free form. The polypeptide is Venom nerve growth factor (Agkistrodon contortrix contortrix (Southern copperhead)).